Here is a 306-residue protein sequence, read N- to C-terminus: Ornithine carbamoyltransferase (306 aa).

Residues 50–53 (STRT), Q77, R101, and 128–131 (HPCQ) contribute to the carbamoyl phosphate site. L-ornithine-binding positions include N160, D224, and 228–229 (SM). Carbamoyl phosphate-binding positions include 264–265 (CL) and R292.

Belongs to the aspartate/ornithine carbamoyltransferase superfamily. OTCase family.

It localises to the cytoplasm. The enzyme catalyses carbamoyl phosphate + L-ornithine = L-citrulline + phosphate + H(+). It functions in the pathway amino-acid biosynthesis; L-arginine biosynthesis; L-arginine from L-ornithine and carbamoyl phosphate: step 1/3. Its function is as follows. Reversibly catalyzes the transfer of the carbamoyl group from carbamoyl phosphate (CP) to the N(epsilon) atom of ornithine (ORN) to produce L-citrulline. The chain is Ornithine carbamoyltransferase from Mycobacterium leprae (strain TN).